The primary structure comprises 100 residues: Small ribosomal subunit protein uS14c (100 aa).

Residues 1–22 (MARKGLIQRENKRQKLEQKYHS) form a disordered region. The segment covering 7–20 (IQRENKRQKLEQKY) has biased composition (basic and acidic residues).

This sequence belongs to the universal ribosomal protein uS14 family. Part of the 30S ribosomal subunit.

Its subcellular location is the plastid. The protein resides in the chloroplast. Binds 16S rRNA, required for the assembly of 30S particles. This is Small ribosomal subunit protein uS14c from Daucus carota (Wild carrot).